Consider the following 411-residue polypeptide: Translation initiation factor 2 subunit gamma (411 aa).

One can recognise a tr-type G domain in the interval 9 to 203; the sequence is QAEVNIGMVG…AIEDFIPTPK (195 aa). The interval 18–25 is G1; sequence GHVDHGKT. Residues Asp21, Thr25, Gly46, and Thr48 each coordinate Mg(2+). 21–26 serves as a coordination point for GTP; it reads DHGKTT. A G2 region spans residues 46–50; that stretch reads GITIK. Positions 61, 64, 73, and 76 each coordinate Zn(2+). The tract at residues 90 to 93 is G3; that stretch reads DAPG. Residues 146–149 and 181–183 each bind GTP; these read NKIE and SAL. Residues 146-149 are G4; sequence NKIE. Residues 181 to 183 are G5; the sequence is SAL.

Belongs to the TRAFAC class translation factor GTPase superfamily. Classic translation factor GTPase family. EIF2G subfamily. As to quaternary structure, heterotrimer composed of an alpha, a beta and a gamma chain. The cofactor is Mg(2+).

It catalyses the reaction GTP + H2O = GDP + phosphate + H(+). EIF-2 functions in the early steps of protein synthesis by forming a ternary complex with GTP and initiator tRNA. The chain is Translation initiation factor 2 subunit gamma from Pyrococcus horikoshii (strain ATCC 700860 / DSM 12428 / JCM 9974 / NBRC 100139 / OT-3).